A 297-amino-acid chain; its full sequence is Pyridoxal 5'-phosphate synthase subunit PdxS (297 aa).

Residue Asp-27 coordinates D-ribose 5-phosphate. The active-site Schiff-base intermediate with D-ribose 5-phosphate is Lys-84. Residue Gly-156 coordinates D-ribose 5-phosphate. Position 168 (Arg-168) interacts with D-glyceraldehyde 3-phosphate. D-ribose 5-phosphate contacts are provided by residues Gly-217 and 238-239 (GS).

It belongs to the PdxS/SNZ family. In the presence of PdxT, forms a dodecamer of heterodimers.

The enzyme catalyses aldehydo-D-ribose 5-phosphate + D-glyceraldehyde 3-phosphate + L-glutamine = pyridoxal 5'-phosphate + L-glutamate + phosphate + 3 H2O + H(+). Its pathway is cofactor biosynthesis; pyridoxal 5'-phosphate biosynthesis. Catalyzes the formation of pyridoxal 5'-phosphate from ribose 5-phosphate (RBP), glyceraldehyde 3-phosphate (G3P) and ammonia. The ammonia is provided by the PdxT subunit. Can also use ribulose 5-phosphate and dihydroxyacetone phosphate as substrates, resulting from enzyme-catalyzed isomerization of RBP and G3P, respectively. The sequence is that of Pyridoxal 5'-phosphate synthase subunit PdxS from Corynebacterium diphtheriae (strain ATCC 700971 / NCTC 13129 / Biotype gravis).